The following is a 390-amino-acid chain: Chorismate synthase 2 (390 aa).

NADP(+) contacts are provided by Arg-39 and Arg-45. Residues 132–134, 253–254, Gly-298, 313–317, and Arg-339 each bind FMN; these read RSS, NA, and KPIPT.

This sequence belongs to the chorismate synthase family. As to quaternary structure, homotetramer. The cofactor is FMNH2.

It catalyses the reaction 5-O-(1-carboxyvinyl)-3-phosphoshikimate = chorismate + phosphate. The protein operates within metabolic intermediate biosynthesis; chorismate biosynthesis; chorismate from D-erythrose 4-phosphate and phosphoenolpyruvate: step 7/7. In terms of biological role, catalyzes the anti-1,4-elimination of the C-3 phosphate and the C-6 proR hydrogen from 5-enolpyruvylshikimate-3-phosphate (EPSP) to yield chorismate, which is the branch point compound that serves as the starting substrate for the three terminal pathways of aromatic amino acid biosynthesis. This reaction introduces a second double bond into the aromatic ring system. The protein is Chorismate synthase 2 of Bacillus thuringiensis (strain Al Hakam).